Consider the following 118-residue polypeptide: Ribonuclease P protein component (118 aa).

It belongs to the RnpA family. In terms of assembly, consists of a catalytic RNA component (M1 or rnpB) and a protein subunit.

It catalyses the reaction Endonucleolytic cleavage of RNA, removing 5'-extranucleotides from tRNA precursor.. Its function is as follows. RNaseP catalyzes the removal of the 5'-leader sequence from pre-tRNA to produce the mature 5'-terminus. It can also cleave other RNA substrates such as 4.5S RNA. The protein component plays an auxiliary but essential role in vivo by binding to the 5'-leader sequence and broadening the substrate specificity of the ribozyme. This chain is Ribonuclease P protein component, found in Shewanella amazonensis (strain ATCC BAA-1098 / SB2B).